The chain runs to 390 residues: Trehalose-phosphate phosphatase (390 aa).

D150 (nucleophile) is an active-site residue. The Mg(2+) site is built by D150, D152, and D333. 150–152 (DFD) serves as a coordination point for substrate.

This sequence belongs to the trehalose phosphatase family. Mg(2+) serves as cofactor.

The catalysed reaction is alpha,alpha-trehalose 6-phosphate + H2O = alpha,alpha-trehalose + phosphate. The protein operates within glycan biosynthesis; trehalose biosynthesis. Removes the phosphate from trehalose 6-phosphate to produce free trehalose. The sequence is that of Trehalose-phosphate phosphatase (otsB) from Mycobacterium ulcerans (strain Agy99).